A 378-amino-acid chain; its full sequence is Probable pectin lyase A (378 aa).

A signal peptide spans 1-18; it reads MKYQDLLAIAGCIANAGA. Disulfide bonds link C81-C100 and C90-C224. The N-linked (GlcNAc...) asparagine glycan is linked to N127. R254 is a catalytic residue. C321 and C329 are disulfide-bonded.

Belongs to the polysaccharide lyase 1 family.

It is found in the secreted. The catalysed reaction is Eliminative cleavage of (1-&gt;4)-alpha-D-galacturonan methyl ester to give oligosaccharides with 4-deoxy-6-O-methyl-alpha-D-galact-4-enuronosyl groups at their non-reducing ends.. Its function is as follows. Pectinolytic enzymes consist of four classes of enzymes: pectin lyase, polygalacturonase, pectin methylesterase and rhamnogalacturonase. Among pectinolytic enzymes, pectin lyase is the most important in depolymerization of pectin, since it cleaves internal glycosidic bonds of highly methylated pectins. The sequence is that of Probable pectin lyase A (pelA) from Aspergillus fumigatus (strain CBS 144.89 / FGSC A1163 / CEA10) (Neosartorya fumigata).